The chain runs to 395 residues: Putative phosphatidate cytidylyltransferase (395 aa).

9 helical membrane passes run 13–33 (STVFVVLLIVFCFFLMFSAFA), 78–98 (FAFGLVIVLFISVIAVLMNWE), 115–135 (SLLSGIMVSGGMIPTFFVIYF), 144–164 (WIWTASFAGMIVFLWAVYMIS), 177–197 (IYSLGAVICFIACIGTIYFSV), 201–221 (WTTIFLLIAIGVCTDTFAYLF), 242–262 (AFFGVTGTVLTISIICVLYSI), 306–326 (FYIYWWVSTLALIFTASIFAI), and 358–378 (FDSSSFLISFFFIYHVIAGIS).

It belongs to the CDS family.

The protein localises to the cell membrane. The catalysed reaction is a 1,2-diacyl-sn-glycero-3-phosphate + CTP + H(+) = a CDP-1,2-diacyl-sn-glycerol + diphosphate. The protein operates within phospholipid metabolism; CDP-diacylglycerol biosynthesis; CDP-diacylglycerol from sn-glycerol 3-phosphate: step 3/3. The protein is Putative phosphatidate cytidylyltransferase (cdsA) of Mycoplasma pneumoniae (strain ATCC 29342 / M129 / Subtype 1) (Mycoplasmoides pneumoniae).